Here is a 146-residue protein sequence, read N- to C-terminus: 3-hydroxyacyl-[acyl-carrier-protein] dehydratase FabZ (146 aa).

Histidine 49 is a catalytic residue.

The protein belongs to the thioester dehydratase family. FabZ subfamily.

The protein localises to the cytoplasm. It catalyses the reaction a (3R)-hydroxyacyl-[ACP] = a (2E)-enoyl-[ACP] + H2O. Functionally, involved in unsaturated fatty acids biosynthesis. Catalyzes the dehydration of short chain beta-hydroxyacyl-ACPs and long chain saturated and unsaturated beta-hydroxyacyl-ACPs. The chain is 3-hydroxyacyl-[acyl-carrier-protein] dehydratase FabZ from Wolbachia sp. subsp. Brugia malayi (strain TRS).